The primary structure comprises 724 residues: Solute carrier organic anion transporter family member 4C1 (724 aa).

Residues 1-80 form a disordered region; sequence MQGSKGVENP…PPGSQLSELE (80 aa). Residues 1–101 lie on the Cytoplasmic side of the membrane; sequence MQGSKGVENP…QCLQRCNNPK (101 aa). A phosphoserine mark is found at Ser15 and Ser16. Thr19 carries the post-translational modification Phosphothreonine. 3 positions are modified to phosphoserine: Ser24, Ser26, and Ser28. Over residues 25–46 the composition is skewed to polar residues; sequence ASPSQVEVSAVASRNQNGGSQP. The helical transmembrane segment at 102 to 122 threads the bilayer; it reads GFLLHYCLLALTQGIVVNGLV. Topologically, residues 123-141 are extracellular; sequence NISISTIEKRYEMKSSLTG. A helical transmembrane segment spans residues 142–162; it reads LISSSYDISFCVLSLFVSFFG. The Cytoplasmic segment spans residues 163–168; it reads ERGHKP. A helical transmembrane segment spans residues 169-193; the sequence is RWLAFASFMIGLGALVFSLPHFFSG. Topologically, residues 194-218 are extracellular; it reads RYELGTIFEDTCLTRNSTRCASSTS. The chain crosses the membrane as a helical span at residues 219-249; sequence LLSNYFYVFVLGQLLLGTGGTPLYTLGTAFI. The Cytoplasmic segment spans residues 250–269; that stretch reads DDSVPTHKSSLYIGIGYSMS. The chain crosses the membrane as a helical span at residues 270–290; sequence ILGPAIGYVLGGQLLTMYIDV. The Extracellular segment spans residues 291 to 306; that stretch reads AMGQSSDLTEDDPRWL. The chain crosses the membrane as a helical span at residues 307-331; sequence GAWWIGFLLAWLFAWSLIMPFSCFP. Residues 332–376 are Cytoplasmic-facing; it reads KHLPGTAKIQAGKTSQTHQNNSTSFQHMDENFGKSIKDFPTAVKN. The helical transmembrane segment at 377-398 threads the bilayer; sequence LMRNTVFICLVLSTTSEALVTT. Topologically, residues 399–418 are extracellular; the sequence is GFATFLPKFIENQFGLTSSF. The chain crosses the membrane as a helical span at residues 419–442; sequence AATLGGAVLIPGAALGQILGGVLV. Topologically, residues 443 to 446 are cytoplasmic; the sequence is SKFK. The helical transmembrane segment at 447–470 threads the bilayer; sequence MKCKNTMKFALCTSGVALMLSFVF. The Extracellular segment spans residues 471–580; that stretch reads IYAKCENGPF…KTQCSNLPIF (110 aa). Residues 494–549 form the Kazal-like domain; sequence GNLTAPCNANCNCLRSYYYPLCGSDGVQYFSPCFAGCLNSVSNRKPKAYYNCSCIE. Cystine bridges form between Cys500-Cys530, Cys506-Cys526, and Cys515-Cys547. Residues 581–603 form a helical membrane-spanning segment; that stretch reads LGIFFITVIFTFMAGTPITVSIL. Residues 604 to 612 are Cytoplasmic-facing; it reads RCVNHRQRS. The chain crosses the membrane as a helical span at residues 613–638; the sequence is LALGVQFMLLRLLGTIPGPIIFGVTI. Over 639–672 the chain is Extracellular; sequence DSTCVLWDINECGTKGACWIYDNIRMAHMLVAIS. Residues 673–690 traverse the membrane as a helical segment; the sequence is VTCKVITIFFNGLAIVLY. Over 691-724 the chain is Cytoplasmic; it reads KPPPPGTEVSFQSQNVVVSTITVEEDLNKIENEG.

This sequence belongs to the organo anion transporter (TC 2.A.60) family. In terms of tissue distribution, predominantly expressed in kidney and lung but also weakly expressed in brain. Localizes primarily in the proximal straight tubules, the S3 fraction of the nephron.

The protein localises to the basolateral cell membrane. It is found in the apical cell membrane. The enzyme catalyses estrone 3-sulfate(out) = estrone 3-sulfate(in). It carries out the reaction L-thyroxine(out) = L-thyroxine(in). It catalyses the reaction 3,3',5-triiodo-L-thyronine(out) = 3,3',5-triiodo-L-thyronine(in). The catalysed reaction is chenodeoxycholate(out) = chenodeoxycholate(in). The enzyme catalyses glycocholate(out) = glycocholate(in). It carries out the reaction L-homoarginine(in) = L-homoarginine(out). It catalyses the reaction L-arginine(in) = L-arginine(out). The catalysed reaction is N(omega),N(omega)-dimethyl-L-arginine(out) = N(omega),N(omega)-dimethyl-L-arginine(in). Mediates the transport of organic anions such as steroids (estrone 3-sulfate, chenodeoxycholate, glycocholate) and thyroid hormones (3,3',5-triiodo-L-thyronine (T3), L-thyroxine (T4)), in the kidney. Capable of transporting cAMP and pharmacological substances such as digoxin, ouabain and methotrexate. Transport is independent of sodium, chloride ion, and ATP. Transport activity is stimulated by an acidic extracellular environment due to increased substrate affinity to the transporter. The driving force for this transport activity is currently not known. The role of hydrogencarbonate (HCO3(-), bicarbonate) as the probable counteranion that exchanges for organic anions is still not well defined. Functions as an uptake transporter at the apical membrane, suggesting a role in renal reabsorption. Involved in the renal secretion of the uremic toxin ADMA (N(omega),N(omega)-dimethyl-L-arginine or asymmetrical dimethylarginine), which is associated to cardiovascular events and mortality, and the structurally related amino acids L-arginine and L-homoarginine (a cardioprotective biomarker). Can act bidirectionally, suggesting a dual protective role of this transport protein; exporting L-homoarginine after being synthesized in proximal tubule cells, and mediating uptake of ADMA from the blood into proximal tubule cells where it is degraded by the enzyme dimethylarginine dimethylaminohydrolase 1 (DDAH1). May be involved in sperm maturation by enabling directed movement of organic anions and compounds within or between cells. This ion-transporting process is important to maintain the strict epididymal homeostasis necessary for sperm maturation. May have a role in secretory functions since seminal vesicle epithelial cells are assumed to secrete proteins involved in decapacitation by modifying surface proteins to facilitate the acquisition of the ability to fertilize the egg. The sequence is that of Solute carrier organic anion transporter family member 4C1 from Rattus norvegicus (Rat).